A 126-amino-acid polypeptide reads, in one-letter code: Holo-[acyl-carrier-protein] synthase (126 aa).

Residues Asp9 and Glu58 each coordinate Mg(2+).

The protein belongs to the P-Pant transferase superfamily. AcpS family. The cofactor is Mg(2+).

The protein resides in the cytoplasm. The catalysed reaction is apo-[ACP] + CoA = holo-[ACP] + adenosine 3',5'-bisphosphate + H(+). In terms of biological role, transfers the 4'-phosphopantetheine moiety from coenzyme A to a Ser of acyl-carrier-protein. The protein is Holo-[acyl-carrier-protein] synthase of Buchnera aphidicola subsp. Schizaphis graminum (strain Sg).